A 761-amino-acid chain; its full sequence is Neutral ceramidase (761 aa).

Residues 1 to 11 are Cytoplasmic-facing; it reads MAKRTFSSLEA. A helical; Signal-anchor for type II membrane protein transmembrane segment spans residues 12–32; that stretch reads FLIFLLVMMTAITVALLTLLF. At 33–761 the chain is on the lumenal side; sequence VTSGTIENHK…ISSPFEIVTT (729 aa). The disordered stretch occupies residues 43-76; the sequence is DSGNHWVSTTQGPTTTQSSPTTQTPTTQTPDLPP. Positions 50-76 are enriched in low complexity; it reads STTQGPTTTQSSPTTQTPTTQTPDLPP. O-linked (GalNAc...) threonine glycans are attached at residues threonine 51, threonine 52, threonine 56, threonine 57, and threonine 58. Residues serine 60 and serine 61 are each glycosylated (O-linked (GalNAc...) serine). 6 O-linked (GalNAc...) threonine glycosylation sites follow: threonine 63, threonine 64, threonine 66, threonine 68, threonine 69, and threonine 71. A Ca(2+)-binding site is contributed by leucine 115. Residue histidine 175 participates in Zn(2+) binding. N-linked (GlcNAc...) asparagine glycosylation occurs at asparagine 198. Residue histidine 284 coordinates Zn(2+). Serine 335 serves as the catalytic Nucleophile. Intrachain disulfides connect cysteine 343–cysteine 357 and cysteine 350–cysteine 365. N-linked (GlcNAc...) asparagine glycans are attached at residues asparagine 412 and asparagine 449. An intrachain disulfide couples cysteine 429 to cysteine 479. Zn(2+) contacts are provided by glutamate 521 and tyrosine 560. Ca(2+)-binding residues include aspartate 693, serine 695, and threonine 698. Residues 751 to 761 form a required for correct folding and localization region; it reads GISSPFEIVTT.

It belongs to the neutral ceramidase family. Requires Zn(2+) as cofactor. Proteolytic cleavage of the N-terminus removes the signal-anchor and produces a soluble form of the protein. In terms of processing, N-glycosylated. Required for enzyme activity. Post-translationally, O-glycosylated. Required to retain it as a type II membrane protein at the cell surface. Phosphorylated. May prevent ubiquitination and subsequent degradation. In terms of processing, ubiquitinated, leading to its degradation by the proteasome. Ubiquitination is triggered by nitric oxide. Highly expressed in brain, kidney and heart. Expressed at lower level in other tissues such as liver. Expressed in intestine, kidney and liver (at protein level). Localizes in the epithelia of the jejunum and ileum.

It is found in the cell membrane. The protein localises to the membrane raft. The protein resides in the membrane. It localises to the caveola. Its subcellular location is the golgi apparatus membrane. It is found in the mitochondrion. The protein localises to the secreted. The protein resides in the extracellular exosome. It catalyses the reaction an N-acylsphing-4-enine + H2O = sphing-4-enine + a fatty acid. The enzyme catalyses N-hexadecanoylsphing-4-enine + H2O = sphing-4-enine + hexadecanoate. It carries out the reaction N-tetradecanoylsphing-4-enine + H2O = tetradecanoate + sphing-4-enine. The catalysed reaction is N-(9Z-octadecenoyl)-sphing-4-enine + H2O = sphing-4-enine + (9Z)-octadecenoate. It catalyses the reaction N-(15Z-tetracosenoyl)-sphing-4-enine + H2O = (15Z)-tetracosenoate + sphing-4-enine. The enzyme catalyses N-octanoylsphing-4-enine + H2O = octanoate + sphing-4-enine. It carries out the reaction N-dodecanoylsphing-4-enine + H2O = dodecanoate + sphing-4-enine. The catalysed reaction is N-(hexanoyl)sphing-4-enine + H2O = hexanoate + sphing-4-enine. It catalyses the reaction N-octadecanoylsphing-4-enine + H2O = sphing-4-enine + octadecanoate. The enzyme catalyses sphinganine + hexadecanoate = N-hexadecanoylsphinganine + H2O. It carries out the reaction N-(octadecanoyl)-sphinganine + H2O = sphinganine + octadecanoate. It participates in lipid metabolism; sphingolipid metabolism. The reverse reaction is inhibited by Zn(2+) and Cu(2+). Inhibited by cardiolipin and phosphatidic acid. In terms of biological role, plasma membrane ceramidase that hydrolyzes sphingolipid ceramides into sphingosine and free fatty acids at neutral pH. Ceramides, sphingosine, and its phosphorylated form sphingosine-1-phosphate are bioactive lipids that mediate cellular signaling pathways regulating several biological processes including cell proliferation, apoptosis and differentiation. Also catalyzes the reverse reaction allowing the synthesis of ceramides from fatty acids and sphingosine. Together with sphingomyelinase, participates in the production of sphingosine and sphingosine-1-phosphate from the degradation of sphingomyelin, a sphingolipid enriched in the plasma membrane of cells. Also participates in the hydrolysis of ceramides from the extracellular milieu allowing the production of sphingosine-1-phosphate inside and outside cells. This is the case for instance with the digestion of dietary sphingolipids in the intestinal tract. The sequence is that of Neutral ceramidase (Asah2) from Rattus norvegicus (Rat).